The primary structure comprises 643 residues: Macrolide export ATP-binding/permease protein MacB (643 aa).

Residues 6 to 244 enclose the ABC transporter domain; it reads IELKGVSRVF…QVRSPFGVRH (239 aa). Residue 42–49 participates in ATP binding; that stretch reads GASGSGKS. The next 4 membrane-spanning stretches (helical) occupy residues 270–290, 518–538, 569–589, and 606–626; these read VLTL…LAIG, LTIL…IGVM, FLIE…VIGL, and LMPI…FGYL.

It belongs to the ABC transporter superfamily. Macrolide exporter (TC 3.A.1.122) family. Homodimer.

The protein localises to the cell inner membrane. Functionally, non-canonical ABC transporter that contains transmembrane domains (TMD), which form a pore in the inner membrane, and an ATP-binding domain (NBD), which is responsible for energy generation. Confers resistance against macrolides. The sequence is that of Macrolide export ATP-binding/permease protein MacB from Wolinella succinogenes (strain ATCC 29543 / DSM 1740 / CCUG 13145 / JCM 31913 / LMG 7466 / NCTC 11488 / FDC 602W) (Vibrio succinogenes).